The following is a 588-amino-acid chain: 2-succinyl-5-enolpyruvyl-6-hydroxy-3-cyclohexene-1-carboxylate synthase (588 aa).

This sequence belongs to the TPP enzyme family. MenD subfamily. As to quaternary structure, homodimer. Mg(2+) serves as cofactor. The cofactor is Mn(2+). Thiamine diphosphate is required as a cofactor.

It carries out the reaction isochorismate + 2-oxoglutarate + H(+) = 5-enolpyruvoyl-6-hydroxy-2-succinyl-cyclohex-3-ene-1-carboxylate + CO2. Its pathway is quinol/quinone metabolism; 1,4-dihydroxy-2-naphthoate biosynthesis; 1,4-dihydroxy-2-naphthoate from chorismate: step 2/7. The protein operates within cofactor biosynthesis; phylloquinone biosynthesis. In terms of biological role, catalyzes the thiamine diphosphate-dependent decarboxylation of 2-oxoglutarate and the subsequent addition of the resulting succinic semialdehyde-thiamine pyrophosphate anion to isochorismate to yield 2-succinyl-5-enolpyruvyl-6-hydroxy-3-cyclohexene-1-carboxylate (SEPHCHC). The protein is 2-succinyl-5-enolpyruvyl-6-hydroxy-3-cyclohexene-1-carboxylate synthase of Prochlorococcus marinus (strain MIT 9515).